A 236-amino-acid polypeptide reads, in one-letter code: Ribose-5-phosphate isomerase A (236 aa).

Substrate is bound by residues 29–32 (SGST), 86–89 (DGAD), and 99–102 (KGGG). The active-site Proton acceptor is glutamate 108. Lysine 126 serves as a coordination point for substrate.

This sequence belongs to the ribose 5-phosphate isomerase family. In terms of assembly, homodimer.

The catalysed reaction is aldehydo-D-ribose 5-phosphate = D-ribulose 5-phosphate. Its pathway is carbohydrate degradation; pentose phosphate pathway; D-ribose 5-phosphate from D-ribulose 5-phosphate (non-oxidative stage): step 1/1. Functionally, catalyzes the reversible conversion of ribose-5-phosphate to ribulose 5-phosphate. The chain is Ribose-5-phosphate isomerase A from Prochlorococcus marinus (strain NATL1A).